A 387-amino-acid chain; its full sequence is 3-ketoacyl-CoA thiolase (387 aa).

Residue C91 is the Acyl-thioester intermediate of the active site. Active-site proton acceptor residues include H343 and C373.

It belongs to the thiolase-like superfamily. Thiolase family. Heterotetramer of two alpha chains (FadB) and two beta chains (FadA).

It localises to the cytoplasm. The enzyme catalyses an acyl-CoA + acetyl-CoA = a 3-oxoacyl-CoA + CoA. Its pathway is lipid metabolism; fatty acid beta-oxidation. Its function is as follows. Catalyzes the final step of fatty acid oxidation in which acetyl-CoA is released and the CoA ester of a fatty acid two carbons shorter is formed. This chain is 3-ketoacyl-CoA thiolase, found in Yersinia enterocolitica serotype O:8 / biotype 1B (strain NCTC 13174 / 8081).